The sequence spans 39 residues: Photosystem II reaction center protein J (39 aa).

A helical membrane pass occupies residues 9–29; sequence LWLVATVGGIAVITVLGIFIY.

This sequence belongs to the PsbJ family. PSII is composed of 1 copy each of membrane proteins PsbA, PsbB, PsbC, PsbD, PsbE, PsbF, PsbH, PsbI, PsbJ, PsbK, PsbL, PsbM, PsbT, PsbX, PsbY, PsbZ, Psb30/Ycf12, at least 3 peripheral proteins of the oxygen-evolving complex and a large number of cofactors. It forms dimeric complexes.

It localises to the plastid. The protein resides in the chloroplast thylakoid membrane. One of the components of the core complex of photosystem II (PSII). PSII is a light-driven water:plastoquinone oxidoreductase that uses light energy to abstract electrons from H(2)O, generating O(2) and a proton gradient subsequently used for ATP formation. It consists of a core antenna complex that captures photons, and an electron transfer chain that converts photonic excitation into a charge separation. The polypeptide is Photosystem II reaction center protein J (Gracilaria tenuistipitata var. liui (Red alga)).